The chain runs to 858 residues: MALRLVTHFDVLEDVLPSLLTQAATTDEGDRAGVLETTYGSLRVLNIERNGNIIYTYKDNKGNAVFGLYDCQTRQNEHLYTFEKDMQAVSCSVNSERTVLAASFIQYTTEGVKNDLQPGSKCLTLLVEIHPVNNVKVLKAVDSCVWVQFLYPQAESHLLPQNHLLLISEEKYIERFHIQITREDGDRVVIRNSSHLPRDRLAEDFVWAQWDLSEQRLYYIELKESRSILKCIQFRADESFNLMFEMPLDITLTGLRFKLVNFGYDYRQDREKLCNQPSLCIFTNHTGSLCMCYSPKSDSREEITYSVFYLHKGYRKIFTAAPGSADSQVTNGADSQVTDGIAFLNLGYFVAVYSPGHFLHLLNIQHPDLVCHSLFLTGNNKIAAVLPPSPLQSLPGSLVLDCYSGKVYRVTLDQSYLLRFLWNAHLDCERMAALHCILSCSQDPGFPEEQIIQWISEHVSACHSFDLIQEFLIASSYWSVYAELDDMGMLLQYSSVLTWNTEIPGIKFTTEELPLPLMKVYGLKGYWAKLNSNLEYIKYTKPHLHYHNSVVRREWHNLISEERTGKRRSTMYVRNILENAMKVIASMETRTLEPRLIPFLQEEDRHQRLLMGLMVSELRDHLLRHLQGVEKKKIEQMVLDYISKLLDLIWCLLETSWRKHSMHPLVLHLNSHCSAADFEVFHLMTRILDAASSLCLPLPPGFHSLHTILGVHCLPLYSLLHYIDNGVLLLTETAVTRLMKDLDNSEKNEQLKFSIIVRLPPLIGQKVCRLWDHPMSSNIISRNHVARLLKNYRKEPRNSMIDKSSFPVEFLPLNYFIEILMGLESSNQALYGFEGHDNVDAEFVEEAALKHTTMLLGL.

The protein belongs to the GSAP family. As to quaternary structure, interacts with APP; specifically interacts with the CTF-alpha product of APP. Interacts with the gamma-secretase complex. The protein is first synthesized as a holoprotein form of 98 kDa and rapidly processed into the gamma-secretase-activating protein 16 kDa C-terminal form, which constitutes the predominant form.

The protein resides in the golgi apparatus. The protein localises to the trans-Golgi network. In terms of biological role, regulator of gamma-secretase activity, which specifically activates the production of amyloid-beta protein (amyloid-beta protein 40 and amyloid-beta protein 42), without affecting the cleavage of other gamma-secretase targets such has Notch. The gamma-secretase complex is an endoprotease complex that catalyzes the intramembrane cleavage of integral membrane proteins such as Notch receptors and APP (amyloid-beta precursor protein). Specifically promotes the gamma-cleavage of APP CTF-alpha (also named APP-CTF) by the gamma-secretase complex to generate amyloid-beta, while it reduces the epsilon-cleavage of APP CTF-alpha, leading to a low production of AICD. The chain is Gamma-secretase-activating protein (Gsap) from Mus musculus (Mouse).